Consider the following 341-residue polypeptide: Phosphate acyltransferase (341 aa).

This sequence belongs to the PlsX family. Homodimer. Probably interacts with PlsY.

Its subcellular location is the cytoplasm. The catalysed reaction is a fatty acyl-[ACP] + phosphate = an acyl phosphate + holo-[ACP]. It participates in lipid metabolism; phospholipid metabolism. Its function is as follows. Catalyzes the reversible formation of acyl-phosphate (acyl-PO(4)) from acyl-[acyl-carrier-protein] (acyl-ACP). This enzyme utilizes acyl-ACP as fatty acyl donor, but not acyl-CoA. The sequence is that of Phosphate acyltransferase from Saccharophagus degradans (strain 2-40 / ATCC 43961 / DSM 17024).